The primary structure comprises 424 residues: 3-phosphoshikimate 1-carboxyvinyltransferase (424 aa).

The 3-phosphoshikimate site is built by K21, S22, and R26. Phosphoenolpyruvate is bound at residue K21. Residues G92 and R120 each coordinate phosphoenolpyruvate. 6 residues coordinate 3-phosphoshikimate: S163, S164, Q165, S191, D306, and K333. Q165 lines the phosphoenolpyruvate pocket. D306 functions as the Proton acceptor in the catalytic mechanism. R337, R379, and K405 together coordinate phosphoenolpyruvate.

It belongs to the EPSP synthase family. Monomer.

It localises to the cytoplasm. The enzyme catalyses 3-phosphoshikimate + phosphoenolpyruvate = 5-O-(1-carboxyvinyl)-3-phosphoshikimate + phosphate. The protein operates within metabolic intermediate biosynthesis; chorismate biosynthesis; chorismate from D-erythrose 4-phosphate and phosphoenolpyruvate: step 6/7. In terms of biological role, catalyzes the transfer of the enolpyruvyl moiety of phosphoenolpyruvate (PEP) to the 5-hydroxyl of shikimate-3-phosphate (S3P) to produce enolpyruvyl shikimate-3-phosphate and inorganic phosphate. This chain is 3-phosphoshikimate 1-carboxyvinyltransferase, found in Clostridium perfringens (strain ATCC 13124 / DSM 756 / JCM 1290 / NCIMB 6125 / NCTC 8237 / Type A).